The following is a 296-amino-acid chain: Arginine/serine-rich protein 1 (296 aa).

The disordered stretch occupies residues 1-131 (MSNYVNDMWP…RSRSRSRERS (131 aa)). Residue Ser-12 is modified to Phosphoserine. The span at 20 to 31 (SASRSGGSSRLS) shows a compositional bias: low complexity. The segment covering 32 to 125 (SRSRSRSFSR…RSRSRSRSRS (94 aa)) has biased composition (basic residues). Phosphoserine occurs at positions 111 and 113. Arg-141 is modified (omega-N-methylarginine). Over residues 156 to 165 (ERSRWRDRSR) the composition is skewed to basic and acidic residues. Disordered stretches follow at residues 156 to 175 (ERSR…TPFR) and 217 to 296 (SHGI…WIPV). Residues 245–261 (EKPSQQRSIAFSSNNSV) are compositionally biased toward polar residues. A compositionally biased stretch (basic and acidic residues) spans 272-287 (ATEETSSRSPKIDKKK). At Ser-280 the chain carries Phosphoserine.

This sequence belongs to the RSRP family. In terms of processing, phosphorylated. Phosphorylation at Ser-111 and Ser-113 mediates the interaction with spliceosome proteins.

Its subcellular location is the nucleus. Its function is as follows. Probably acts as a spliceosomal factor that contributes to spliceosome assembly and regulates the isoform switching of proteins such as PARP6. The chain is Arginine/serine-rich protein 1 (RSRP1) from Macaca fascicularis (Crab-eating macaque).